The following is a 208-amino-acid chain: Cytidylate kinase (208 aa).

7 to 15 (GPAASGKGT) lines the ATP pocket.

The protein belongs to the cytidylate kinase family. Type 1 subfamily.

Its subcellular location is the cytoplasm. It catalyses the reaction CMP + ATP = CDP + ADP. It carries out the reaction dCMP + ATP = dCDP + ADP. This is Cytidylate kinase from Xanthobacter autotrophicus (strain ATCC BAA-1158 / Py2).